Reading from the N-terminus, the 236-residue chain is C-&gt;U-editing enzyme APOBEC-1 (236 aa).

In terms of domain architecture, CMP/dCMP-type deaminase spans 10–134 (KDYTLRRRIE…RRNRQGLKDL (125 aa)). Residue His-61 participates in Zn(2+) binding. Glu-63 functions as the Proton donor in the catalytic mechanism. Positions 93 and 96 each coordinate Zn(2+).

Belongs to the cytidine and deoxycytidylate deaminase family. Homodimer. Interacts with A1CF; form an mRNA editing complex. Interacts with RBM47; form an mRNA editing complex. Found in a complex with CELF2/CUGBP2 and A1CF. Interacts with HNRPAB. Interacts with SYNCRIP. The cofactor is Zn(2+). Expressed exclusively in the intestine.

The protein localises to the cytoplasm. The protein resides in the nucleus. It catalyses the reaction a cytidine in mRNA + H2O + H(+) = a uridine in mRNA + NH4(+). The enzyme catalyses cytidine(6666) in apoB mRNA + H2O + H(+) = uridine(6666) in apoB mRNA + NH4(+). Its function is as follows. Cytidine deaminase catalyzing the cytidine to uridine postranscriptional editing of a variety of mRNAs. Form complexes with cofactors that confer differential editing activity and selectivity. Responsible for the postranscriptional editing of a CAA codon for Gln to a UAA codon for stop in the apolipoprotein B mRNA. Also involved in CGA (Arg) to UGA (Stop) editing in the NF1 mRNA. May also play a role in the epigenetic regulation of gene expression by participating in DNA demethylation. This Oryctolagus cuniculus (Rabbit) protein is C-&gt;U-editing enzyme APOBEC-1.